A 1320-amino-acid polypeptide reads, in one-letter code: Poly [ADP-ribose] polymerase tankyrase-1 (1320 aa).

A compositionally biased stretch (basic residues) spans 1 to 15; the sequence is MAASRRSQHHHHHHQ. Disordered regions lie at residues 1–88 and 111–152; these read MAAS…DGAV and AGGG…AAGV. The span at 25–46 shows a compositional bias: pro residues; the sequence is SAPPPPPPPPLSPGLAPGPTPA. Residues 69–82 are compositionally biased toward basic and acidic residues; it reads DGSRDPPDRPRSPD. Residues 120–152 are compositionally biased toward low complexity; the sequence is NSASSASSPTSSSSSSPSSPGSSLAESPEAAGV. ANK repeat units follow at residues 174 to 202, 208 to 237, 241 to 270, 274 to 303, 361 to 390, 394 to 423, 427 to 456, 514 to 546, 550 to 579, 583 to 612, 676 to 705, 709 to 738, 742 to 771, 775 to 803, 829 to 858, 862 to 891, 895 to 924, and 928 to 957; these read GALR…NVNA, RKSS…NVHA, GGLI…DPNA, WNYT…DPNI, RKST…DVHA, GGLV…CVNA, WQFT…DPTL, SHET…NVNE, DFMT…KMNA, LGQT…DPSI, RHST…DVHA, GGLV…SVNV, WKFT…DPTK, DGNT…LLDA, RNST…DVNA, GGLI…CVNA, WAFT…DPTM, and EGQT…LPTC. Positions 1019-1082 constitute an SAM domain; that stretch reads GLDMNISQFL…IKGVERLLGG (64 aa). The 206-residue stretch at 1105–1310 folds into the PARP catalytic domain; it reads APEDKEYQSV…YQIMKPEAPS (206 aa). Zn(2+)-binding residues include Cys1227, His1230, Cys1235, and Cys1238.

Belongs to the ARTD/PARP family. In terms of assembly, oligomerizes and associates with TNKS2. Interacts with the cytoplasmic domain of LNPEP/Otase in SLC2A4/GLUT4-vesicles. Binds to the N-terminus of telomeric TERF1 via the ANK repeats. Found in a complex with POT1; TERF1 and TINF2. Interacts with AXIN1. Interacts with AXIN2. Interacts with BLZF1 and CASC3. Interacts with NUMA1. Post-translationally, phosphorylated on serine residues by MAPK kinases upon insulin stimulation. Phosphorylated during mitosis. Ubiquitinated by RNF146 when auto-poly-ADP-ribosylated, leading to its degradation. In terms of processing, ADP-ribosylated (-auto). Poly-ADP-ribosylated protein is recognized by RNF146, followed by ubiquitination.

It is found in the cytoplasm. Its subcellular location is the golgi apparatus membrane. The protein resides in the cytoskeleton. The protein localises to the microtubule organizing center. It localises to the centrosome. It is found in the nucleus. Its subcellular location is the nuclear pore complex. The protein resides in the chromosome. The protein localises to the telomere. It localises to the spindle pole. It carries out the reaction NAD(+) + (ADP-D-ribosyl)n-acceptor = nicotinamide + (ADP-D-ribosyl)n+1-acceptor + H(+).. It catalyses the reaction L-aspartyl-[protein] + NAD(+) = 4-O-(ADP-D-ribosyl)-L-aspartyl-[protein] + nicotinamide. The catalysed reaction is L-glutamyl-[protein] + NAD(+) = 5-O-(ADP-D-ribosyl)-L-glutamyl-[protein] + nicotinamide. Its function is as follows. Poly-ADP-ribosyltransferase involved in various processes such as Wnt signaling pathway, telomere length and vesicle trafficking. Acts as an activator of the Wnt signaling pathway by mediating poly-ADP-ribosylation (PARsylation) of AXIN1 and AXIN2, 2 key components of the beta-catenin destruction complex: poly-ADP-ribosylated target proteins are recognized by RNF146, which mediates their ubiquitination and subsequent degradation. Also mediates PARsylation of BLZF1 and CASC3, followed by recruitment of RNF146 and subsequent ubiquitination. Mediates PARsylation of TERF1, thereby contributing to the regulation of telomere length. Involved in centrosome maturation during prometaphase by mediating PARsylation of HEPACAM2/MIKI. May also regulate vesicle trafficking and modulate the subcellular distribution of SLC2A4/GLUT4-vesicles. May be involved in spindle pole assembly through PARsylation of NUMA1. Stimulates 26S proteasome activity. This chain is Poly [ADP-ribose] polymerase tankyrase-1 (Tnks), found in Mus musculus (Mouse).